Reading from the N-terminus, the 405-residue chain is Acetylornithine aminotransferase 1 (405 aa).

Pyridoxal 5'-phosphate is bound by residues 103-104 (GA) and Phe136. Residue Arg139 participates in N(2)-acetyl-L-ornithine binding. Pyridoxal 5'-phosphate is bound at residue 221 to 224 (DEVQ). Lys250 bears the N6-(pyridoxal phosphate)lysine mark. Position 278 (Ser278) interacts with N(2)-acetyl-L-ornithine. Position 279 (Thr279) interacts with pyridoxal 5'-phosphate.

It belongs to the class-III pyridoxal-phosphate-dependent aminotransferase family. ArgD subfamily. In terms of assembly, homodimer. Pyridoxal 5'-phosphate is required as a cofactor.

The protein resides in the cytoplasm. The catalysed reaction is N(2)-acetyl-L-ornithine + 2-oxoglutarate = N-acetyl-L-glutamate 5-semialdehyde + L-glutamate. The protein operates within amino-acid biosynthesis; L-arginine biosynthesis; N(2)-acetyl-L-ornithine from L-glutamate: step 4/4. This Bradyrhizobium diazoefficiens (strain JCM 10833 / BCRC 13528 / IAM 13628 / NBRC 14792 / USDA 110) protein is Acetylornithine aminotransferase 1.